The chain runs to 187 residues: Elongation factor P (187 aa).

The protein belongs to the elongation factor P family.

It localises to the cytoplasm. Its pathway is protein biosynthesis; polypeptide chain elongation. In terms of biological role, involved in peptide bond synthesis. Stimulates efficient translation and peptide-bond synthesis on native or reconstituted 70S ribosomes in vitro. Probably functions indirectly by altering the affinity of the ribosome for aminoacyl-tRNA, thus increasing their reactivity as acceptors for peptidyl transferase. This Treponema pallidum (strain Nichols) protein is Elongation factor P (efp).